A 490-amino-acid chain; its full sequence is Cytochrome P450 2C39 (490 aa).

The first 25 residues, 1-25, serve as a signal peptide directing secretion; the sequence is MDLVTFLVLTLSSLILLSLWRQSCG. C435 lines the heme pocket.

The protein belongs to the cytochrome P450 family. Heme serves as cofactor. As to expression, liver.

The protein localises to the endoplasmic reticulum membrane. It is found in the microsome membrane. The catalysed reaction is an organic molecule + reduced [NADPH--hemoprotein reductase] + O2 = an alcohol + oxidized [NADPH--hemoprotein reductase] + H2O + H(+). It catalyses the reaction (5Z,8Z,11Z,14Z)-eicosatetraenoate + reduced [NADPH--hemoprotein reductase] + O2 = 11,12-epoxy-(5Z,8Z,14Z)-eicosatrienoate + oxidized [NADPH--hemoprotein reductase] + H2O + H(+). The enzyme catalyses (5Z,8Z,11Z,14Z)-eicosatetraenoate + reduced [NADPH--hemoprotein reductase] + O2 = 14,15-epoxy-(5Z,8Z,11Z)-eicosatrienoate + oxidized [NADPH--hemoprotein reductase] + H2O + H(+). Its pathway is lipid metabolism; arachidonate metabolism. Its function is as follows. A cytochrome P450 monooxygenase that primarily catalyzes the epoxidation of 11,12 and 14,15 double bonds of (5Z,8Z,11Z,14Z)-eicosatetraenoic acid (arachidonate) forming 11,12- and 14,15-epoxyeicosatrienoic acids (11,12- and 14,15-EET) regioisomers. Mechanistically, uses molecular oxygen inserting one oxygen atom into a substrate, and reducing the second into a water molecule, with two electrons provided by NADPH via cytochrome P450 reductase (CPR; NADPH--hemoprotein reductase). The sequence is that of Cytochrome P450 2C39 from Mus musculus (Mouse).